The sequence spans 483 residues: MIARRIWRSHRFLRPFSSSSVCSPPFRVPEYLSQSSSSPASRPFFVHPPTLMKWGGGSRSWFSNEAMATDSNSGLIDVPLAQTGEGIAECELLKWFVKEGDSVEEFQPLCEVQSDKATIEITSRFKGKVALISHSPGDIIKVGETLVRLAVEDSQDSLLTTDSSEIVTLGGSKQGTENLLGALSTPAVRNLAKDLGIDINVITGTGKDGRVLKEDVLRFSDQKGFVTDSVSSEHAVIGGDSVSTKASSNFEDKTVPLRGFSRAMVKTMTMATSVPHFHFVEEINCDSLVELKQFFKENNTDSTIKHTFLPTLIKSLSMALTKYPFVNSCFNAESLEIILKGSHNIGVAMATEHGLVVPNIKNVQSLSLLEITKELSRLQHLAANNKLNPEDVTGGTITLSNIGAIGGKFGSPLLNLPEVAIIALGRIEKVPKFSKEGTVYPASIMMVNIAADHRVLDGATVARFCCQWKEYVEKPELLMLQMR.

Residues 1–75 (MIARRIWRSH…AMATDSNSGL (75 aa)) constitute a mitochondrion transit peptide. The Lipoyl-binding domain maps to 76–150 (IDVPLAQTGE…KVGETLVRLA (75 aa)). Lysine 116 carries the post-translational modification N6-lipoyllysine. In terms of domain architecture, Peripheral subunit-binding (PSBD) spans 183 to 220 (LSTPAVRNLAKDLGIDINVITGTGKDGRVLKEDVLRFS). Residues histidine 453 and aspartate 457 contribute to the active site.

The protein belongs to the 2-oxoacid dehydrogenase family. In terms of assembly, forms a 24-polypeptide structural core with octahedral symmetry. Requires (R)-lipoate as cofactor. Expressed in the non-photosynthetic organs such as siliques, flowers and roots.

It localises to the mitochondrion matrix. The enzyme catalyses N(6)-[(R)-dihydrolipoyl]-L-lysyl-[protein] + 2-methylpropanoyl-CoA = N(6)-[(R)-S(8)-2-methylpropanoyldihydrolipoyl]-L-lysyl-[protein] + CoA. Functionally, the branched-chain alpha-keto dehydrogenase complex catalyzes the overall conversion of alpha-keto acids to acyl-CoA and CO(2). It contains multiple copies of three enzymatic components: branched-chain alpha-keto acid decarboxylase (E1), lipoamide acyltransferase (E2) and lipoamide dehydrogenase (E3). Within this complex, the catalytic function of this enzyme is to accept, and to transfer to coenzyme A, acyl groups that are generated by the branched-chain alpha-keto acid decarboxylase component. Required during sugar starvation and acts under the control of a sugar-sensing mechanism involving Ser/Thr kinases and phosphatases. The polypeptide is Lipoamide acyltransferase component of branched-chain alpha-keto acid dehydrogenase complex, mitochondrial (BCE2) (Arabidopsis thaliana (Mouse-ear cress)).